An 820-amino-acid chain; its full sequence is G-type lectin S-receptor-like serine/threonine-protein kinase At1g11280 (820 aa).

Positions 1 to 28 (MGIHLGEIGIVLFPWFLWLSLFLSCGYA) are cleaved as a signal peptide. One can recognise a Bulb-type lectin domain in the interval 29–148 (AITISSPLTL…VSENLLWQSF (120 aa)). Residues 29 to 434 (AITISSPLTL…SELAGSRRTK (406 aa)) lie on the Extracellular side of the membrane. Residues Asn57, Asn92, Asn98, Asn241, and Asn272 are each glycosylated (N-linked (GlcNAc...) asparagine). In terms of domain architecture, EGF-like spans 283-319 (PANLCDLYGACGPFGLCVTSNPTKCKCMKGFVPKYKE). Intrachain disulfides connect Cys287-Cys299 and Cys293-Cys307. Asn325, Asn341, and Asn384 each carry an N-linked (GlcNAc...) asparagine glycan. The region spanning 338-422 (CQANLSTKTQ…VGGEFLSIRL (85 aa)) is the PAN domain. 2 cysteine pairs are disulfide-bonded: Cys377-Cys398 and Cys381-Cys387. Residues 435–455 (IIVGSISLSIFVILAFGSYKY) form a helical membrane-spanning segment. The Cytoplasmic segment spans residues 456–820 (WRYRAKQNVG…HVTQTEIYGR (365 aa)). Residues 505 to 792 (FNVSNKLGQG…DLPRPKQPLF (288 aa)) enclose the Protein kinase domain. Residues 511 to 519 (LGQGGFGPV) and Lys533 contribute to the ATP site. Ser539 and Ser554 each carry phosphoserine. Residues 594–611 (TLKLQIDWPKRFNIIQGV) are caM-binding. The active-site Proton acceptor is Asp630. Ser634 and Ser647 each carry phosphoserine. Residue Thr664 is modified to Phosphothreonine. Phosphoserine occurs at positions 707, 708, and 808. Residue Thr815 is modified to Phosphothreonine.

The protein belongs to the protein kinase superfamily. Ser/Thr protein kinase family.

Its subcellular location is the cell membrane. The enzyme catalyses L-seryl-[protein] + ATP = O-phospho-L-seryl-[protein] + ADP + H(+). It catalyses the reaction L-threonyl-[protein] + ATP = O-phospho-L-threonyl-[protein] + ADP + H(+). This is G-type lectin S-receptor-like serine/threonine-protein kinase At1g11280 from Arabidopsis thaliana (Mouse-ear cress).